We begin with the raw amino-acid sequence, 276 residues long: MAAAKRRVRDAEADLNLPPGFRFHPTDEELVAHYLCPRAAGRAAPVPIIAELDLYRHDPWDLPHRALFGRREWYFFTPRDRKYPNGSRPNRAAASGYWKATGADKPVLHNGRTAGIKKALVFYHGKPPRGVKTEWIMHEYRLAKKGGAAAAAGAGALRLDDWVLCRLYNKKNEWEKMQSRKEEEEAMAAAQSWGETRTPESEVVDSDAFPEMDYSLPAASFDDALLPKEEARDDDWLMGMSLDDLQGLGSLLQADDLSMLAPPPAAKTEPLGAPFF.

The NAC domain occupies 17–170 (LPPGFRFHPT…DWVLCRLYNK (154 aa)).

In terms of tissue distribution, expressed in leaf blades.

It is found in the nucleus. Probable transcription factor involved in stress response. The polypeptide is NAC domain-containing protein 67 (Oryza sativa subsp. japonica (Rice)).